The sequence spans 206 residues: Large ribosomal subunit protein uL4 (206 aa).

The tract at residues 63 to 97 (MYKQKGTGRARHHSARAPQFRGGGKAHGPVVRSHE) is disordered. The span at 64-77 (YKQKGTGRARHHSA) shows a compositional bias: basic residues.

It belongs to the universal ribosomal protein uL4 family. As to quaternary structure, part of the 50S ribosomal subunit.

In terms of biological role, one of the primary rRNA binding proteins, this protein initially binds near the 5'-end of the 23S rRNA. It is important during the early stages of 50S assembly. It makes multiple contacts with different domains of the 23S rRNA in the assembled 50S subunit and ribosome. Its function is as follows. Forms part of the polypeptide exit tunnel. The polypeptide is Large ribosomal subunit protein uL4 (Rhizobium leguminosarum bv. trifolii (strain WSM2304)).